The primary structure comprises 288 residues: 4-diphosphocytidyl-2-C-methyl-D-erythritol kinase (288 aa).

Lys11 is a catalytic residue. Position 93–103 (93–103) interacts with ATP; the sequence is PFGAGLGGGSS. Residue Asp135 is part of the active site.

The protein belongs to the GHMP kinase family. IspE subfamily.

The enzyme catalyses 4-CDP-2-C-methyl-D-erythritol + ATP = 4-CDP-2-C-methyl-D-erythritol 2-phosphate + ADP + H(+). The protein operates within isoprenoid biosynthesis; isopentenyl diphosphate biosynthesis via DXP pathway; isopentenyl diphosphate from 1-deoxy-D-xylulose 5-phosphate: step 3/6. In terms of biological role, catalyzes the phosphorylation of the position 2 hydroxy group of 4-diphosphocytidyl-2C-methyl-D-erythritol. This chain is 4-diphosphocytidyl-2-C-methyl-D-erythritol kinase, found in Chlorobium limicola (strain DSM 245 / NBRC 103803 / 6330).